Consider the following 490-residue polypeptide: MLEYGFKDDSLSLHTDLYQINMAETYWRDGIHEKKAIFELFFRRLPFENGYAVFAGLEKAIEYLENFKFTDSDLSYLQDELGYHEDFIEYLRGLSFTGSLYSMKEGELVFNNEPIMRVEAPLVEAQLIETALLNIVNYQTLIATKAARIKGVIGDEVALEFGTRRAHEMDAAMWGARAALIGGFSATSNVRAGKRFNIPVSGTHAHALVQAYRDEYTAFKKYAETHKDCVFLVDTYDTLRSGMPNAIRVAKEFGDRINFIGIRLDSGDLAYLSKKARKMLDEAGFTDAKVIASSDLDEHTIMNLKAQGARIDVWGVGTKLITAYDQPALGAVYKLVAIEEDGKMVDTIKISSNPEKVTTPGRKKVYRIINQSNHHSEGDYIALYDEQVNDQKRLRMFHPVHTFISKFVTNFYAKDLHELIFEKGILCYQNPEISDIQQYVQDNLSLLWEEYKRISKPEEYPVDLSEDCWSNKMQRIHEVKSRIEEELEEE.

H206 bears the Phosphohistidine mark.

The protein belongs to the NAPRTase family. In terms of processing, transiently phosphorylated on a His residue during the reaction cycle. Phosphorylation strongly increases the affinity for substrates and increases the rate of nicotinate D-ribonucleotide production. Dephosphorylation regenerates the low-affinity form of the enzyme, leading to product release.

The enzyme catalyses nicotinate + 5-phospho-alpha-D-ribose 1-diphosphate + ATP + H2O = nicotinate beta-D-ribonucleotide + ADP + phosphate + diphosphate. It functions in the pathway cofactor biosynthesis; NAD(+) biosynthesis; nicotinate D-ribonucleotide from nicotinate: step 1/1. Catalyzes the synthesis of beta-nicotinate D-ribonucleotide from nicotinate and 5-phospho-D-ribose 1-phosphate at the expense of ATP. This chain is Nicotinate phosphoribosyltransferase (pncB), found in Bacillus subtilis (strain 168).